Reading from the N-terminus, the 691-residue chain is DNA-directed RNA polymerase subunit beta' (691 aa).

4 residues coordinate Zn(2+): C76, C78, C94, and C97. The Mg(2+) site is built by D496, D498, and D500.

Belongs to the RNA polymerase beta' chain family. RpoC1 subfamily. Mg(2+) is required as a cofactor. The cofactor is Zn(2+).

The protein resides in the plastid. It catalyses the reaction RNA(n) + a ribonucleoside 5'-triphosphate = RNA(n+1) + diphosphate. DNA-dependent RNA polymerase catalyzes the transcription of DNA into RNA using the four ribonucleoside triphosphates as substrates. The protein is DNA-directed RNA polymerase subunit beta' of Cuscuta exaltata (Tall dodder).